The primary structure comprises 389 residues: Succinate--CoA ligase [ADP-forming] subunit beta (389 aa).

The 228-residue stretch at 9–236 (KELFAKHNVP…KDATDPLELK (228 aa)) folds into the ATP-grasp domain. ATP-binding positions include Lys-45, 52-54 (GRG), Ser-94, and Glu-99. Residues Asn-191 and Asp-205 each coordinate Mg(2+). Substrate-binding positions include Asn-256 and 318-320 (GIT).

The protein belongs to the succinate/malate CoA ligase beta subunit family. In terms of assembly, heterotetramer of two alpha and two beta subunits. Requires Mg(2+) as cofactor.

The enzyme catalyses succinate + ATP + CoA = succinyl-CoA + ADP + phosphate. It catalyses the reaction GTP + succinate + CoA = succinyl-CoA + GDP + phosphate. Its pathway is carbohydrate metabolism; tricarboxylic acid cycle; succinate from succinyl-CoA (ligase route): step 1/1. Functionally, succinyl-CoA synthetase functions in the citric acid cycle (TCA), coupling the hydrolysis of succinyl-CoA to the synthesis of either ATP or GTP and thus represents the only step of substrate-level phosphorylation in the TCA. The beta subunit provides nucleotide specificity of the enzyme and binds the substrate succinate, while the binding sites for coenzyme A and phosphate are found in the alpha subunit. This chain is Succinate--CoA ligase [ADP-forming] subunit beta, found in Mycobacteroides abscessus (strain ATCC 19977 / DSM 44196 / CCUG 20993 / CIP 104536 / JCM 13569 / NCTC 13031 / TMC 1543 / L948) (Mycobacterium abscessus).